Here is a 773-residue protein sequence, read N- to C-terminus: Transducin-like enhancer protein 4 (773 aa).

Disordered regions lie at residues 1–22, 140–162, and 182–357; these read MIRD…QPAQ, HGHG…AIPP, and LPIK…DPLA. The q domain stretch occupies residues 1 to 136; the sequence is MIRDLSKMYP…AIIGQQLQAQ (136 aa). Positions 137–204 are GP domain; sequence HLSHGHGLPV…HQRDRDSIKS (68 aa). Basic and acidic residues predominate over residues 183-202; that stretch reads PIKDEKKHHDNDHQRDRDSI. The segment covering 203–214 has biased composition (low complexity); sequence KSSSVSPSASFR. The tract at residues 205–274 is ccN domain; the sequence is SSVSPSASFR…SPRGSPAHSP (70 aa). Phosphoserine is present on residues S208, S212, S216, and S222. Residues 215-252 show a composition bias toward basic and acidic residues; sequence GSEKHRNSTDYSSESKKQKTEEKEIAARYDSDGEKSDD. K237 bears the N6-acetyllysine mark. S245 is subject to Phosphoserine. S250 is subject to Phosphoserine; by CK2. S265 carries the post-translational modification Phosphoserine; by CDK1. Phosphoserine is present on residues S269 and S273. The span at 273–289 shows a compositional bias: basic and acidic residues; it reads SPRENGLDKTRLLKKDA. The segment at 275–452 is SP domain; the sequence is RENGLDKTRL…PGGKPAYSFH (178 aa). An N6-acetyllysine modification is found at K281. Residues 290–305 show a composition bias toward low complexity; it reads PISPASVASSSSTPSS. Residue S292 is modified to Phosphoserine. The segment covering 317 to 328 has biased composition (polar residues); that stretch reads TTPVSKSNTPTP. T318 carries the phosphothreonine modification. Phosphoserine is present on residues S321 and S323. T325, T327, T334, and T340 each carry phosphothreonine. Position 419 is a phosphoserine (S419). WD repeat units lie at residues 485 to 523, 531 to 570, 575 to 614, 617 to 656, 658 to 697, 699 to 738, and 740 to 773; these read NHGE…NKSP, NRDN…PRIK, SSAP…LVRQ, GHTD…QLQQ, DFTS…KYQL, LHES…SIFQ, and KESS…EVIY.

This sequence belongs to the WD repeat Groucho/TLE family. As to quaternary structure, homooligomer and heterooligomer with other family members. Interacts with PAX5. Interacts with LEF1, TCF7, TCF7L1 and TCF7L2. Interacts with ZNF703; TLE4 may mediate ZNF703 transcriptional repression. Interacts with SIX3 and SIX6. Interacts with PAX2. Interacts with TLE1. Phosphorylated. PAX5 binding increases phosphorylation. Post-translationally, ubiquitinated by XIAP/BIRC4. Expressed in bone marrow-derived macrophages.

The protein resides in the nucleus. Transcriptional corepressor that binds to a number of transcription factors. Inhibits the transcriptional activation mediated by PAX5, and by CTNNB1 and TCF family members in Wnt signaling. The effects of full-length TLE family members may be modulated by association with dominant-negative AES. Essential for the transcriptional repressor activity of SIX3 during retina and lens development and for SIX3 transcriptional auto-repression. Involved in transcriptional repression of GNRHR and enhances MSX1-mediated transcriptional repression of CGA/alpha-GSU. The sequence is that of Transducin-like enhancer protein 4 (Tle4) from Mus musculus (Mouse).